We begin with the raw amino-acid sequence, 548 residues long: MAAKDVLFGNDARTKMLRGVNVLADAVKVTLGPKGRNVVIDKSFGGPTITKDGVTVAKEIELDDKFENMGAQMVKEVASKANDEAGDGTTTATVLAQAIVNEGLKSIAAGMNPMDLKRGIDKAVIAAVAALKDASTPVTDNKAIEQVGTISANSDETVGQIIATAMDKVGAEGVITVEEGQALTDELDVVEGMQFDRGYLSPYFINKQENGTVELENPFILLVDKKVSNIRELLTTLEAVAKSGKPLLIIAEDVEGEALATLVVNNMRGIVKVAAVKAPGFGDRRKAMLQDVATLTAGTVISEEIGMELEKATLEDLGQAKRVVISKDTTIIIDGIGEEADIKARVSQIRGQIEDSSSDYDKEKLQERLAKLAGGVAVIKIGAATEIEMKEKKARVEDALHATRAAVEEGVVAGGGVALVRAAEAIKDLEGINEDQTHGINVAIRAMEAPLRQIVANCGDEASVVLNEVRNGEGNYGYNAGNSTYGDMIAMGILDPTKVTRSALQFAASVAGLMLTTEAMITDAPQDSAPAMPDMGGMGGMGGMGGMM.

Residues 30-33 (TLGP), Lys51, 87-91 (DGTTT), Gly415, and Asp495 each bind ATP.

The protein belongs to the chaperonin (HSP60) family. Forms a cylinder of 14 subunits composed of two heptameric rings stacked back-to-back. Interacts with the co-chaperonin GroES.

The protein resides in the cytoplasm. It carries out the reaction ATP + H2O + a folded polypeptide = ADP + phosphate + an unfolded polypeptide.. In terms of biological role, together with its co-chaperonin GroES, plays an essential role in assisting protein folding. The GroEL-GroES system forms a nano-cage that allows encapsulation of the non-native substrate proteins and provides a physical environment optimized to promote and accelerate protein folding. This chain is Chaperonin GroEL, found in Colwellia psychrerythraea (strain 34H / ATCC BAA-681) (Vibrio psychroerythus).